The primary structure comprises 254 residues: 5-oxoprolinase subunit A 1 (254 aa).

It belongs to the LamB/PxpA family. Forms a complex composed of PxpA, PxpB and PxpC.

The enzyme catalyses 5-oxo-L-proline + ATP + 2 H2O = L-glutamate + ADP + phosphate + H(+). Its function is as follows. Catalyzes the cleavage of 5-oxoproline to form L-glutamate coupled to the hydrolysis of ATP to ADP and inorganic phosphate. In Burkholderia pseudomallei (strain K96243), this protein is 5-oxoprolinase subunit A 1.